Here is a 168-residue protein sequence, read N- to C-terminus: uncharacterized protein (168 aa).

Transmembrane regions (helical) follow at residues 27-47 (NWLV…RISG) and 147-167 (IENG…QVMF).

The protein resides in the membrane. This is an uncharacterized protein from Saccharomyces cerevisiae (strain ATCC 204508 / S288c) (Baker's yeast).